Consider the following 393-residue polypeptide: Elongation factor Tu (393 aa).

A tr-type G domain is found at 6-204 (KPHINVGTIG…ALEKIELPMR (199 aa)). The G1 stretch occupies residues 15–22 (GHVDHGKT). 15–22 (GHVDHGKT) contributes to the GTP binding site. T22 contributes to the Mg(2+) binding site. A G2 region spans residues 58 to 62 (GITIS). The interval 79-82 (DCPG) is G3. GTP-binding positions include 79-83 (DCPGH) and 134-137 (NKCD). Positions 134–137 (NKCD) are G4. The segment at 172–174 (SAV) is G5.

The protein belongs to the TRAFAC class translation factor GTPase superfamily. Classic translation factor GTPase family. EF-Tu/EF-1A subfamily. As to quaternary structure, monomer.

It localises to the cytoplasm. The catalysed reaction is GTP + H2O = GDP + phosphate + H(+). GTP hydrolase that promotes the GTP-dependent binding of aminoacyl-tRNA to the A-site of ribosomes during protein biosynthesis. The chain is Elongation factor Tu from Anaplasma phagocytophilum (strain HZ).